A 465-amino-acid chain; its full sequence is Na(+)-translocating NADH-quinone reductase subunit A (465 aa).

This sequence belongs to the NqrA family. Composed of six subunits; NqrA, NqrB, NqrC, NqrD, NqrE and NqrF.

The catalysed reaction is a ubiquinone + n Na(+)(in) + NADH + H(+) = a ubiquinol + n Na(+)(out) + NAD(+). NQR complex catalyzes the reduction of ubiquinone-1 to ubiquinol by two successive reactions, coupled with the transport of Na(+) ions from the cytoplasm to the periplasm. NqrA to NqrE are probably involved in the second step, the conversion of ubisemiquinone to ubiquinol. The sequence is that of Na(+)-translocating NADH-quinone reductase subunit A from Chlamydia muridarum (strain MoPn / Nigg).